The chain runs to 969 residues: Leucine--tRNA ligase (969 aa).

The 'HIGH' region signature appears at 78–89; the sequence is PYPSGEGLHVGH. The short motif at 739 to 743 is the 'KMSKS' region element; that stretch reads KIGKS. Lys-742 provides a ligand contact to ATP.

It belongs to the class-I aminoacyl-tRNA synthetase family.

It localises to the cytoplasm. It catalyses the reaction tRNA(Leu) + L-leucine + ATP = L-leucyl-tRNA(Leu) + AMP + diphosphate. This is Leucine--tRNA ligase from Mycobacterium tuberculosis (strain ATCC 25177 / H37Ra).